The chain runs to 376 residues: Succinyl-diaminopimelate desuccinylase (376 aa).

His67 contacts Zn(2+). Asp69 is an active-site residue. Residue Asp100 participates in Zn(2+) binding. Catalysis depends on Glu134, which acts as the Proton acceptor. Residues Glu135, Glu163, and His349 each coordinate Zn(2+).

The protein belongs to the peptidase M20A family. DapE subfamily. Homodimer. The cofactor is Zn(2+). Co(2+) is required as a cofactor.

It carries out the reaction N-succinyl-(2S,6S)-2,6-diaminopimelate + H2O = (2S,6S)-2,6-diaminopimelate + succinate. It functions in the pathway amino-acid biosynthesis; L-lysine biosynthesis via DAP pathway; LL-2,6-diaminopimelate from (S)-tetrahydrodipicolinate (succinylase route): step 3/3. Its function is as follows. Catalyzes the hydrolysis of N-succinyl-L,L-diaminopimelic acid (SDAP), forming succinate and LL-2,6-diaminopimelate (DAP), an intermediate involved in the bacterial biosynthesis of lysine and meso-diaminopimelic acid, an essential component of bacterial cell walls. The chain is Succinyl-diaminopimelate desuccinylase from Shewanella sediminis (strain HAW-EB3).